We begin with the raw amino-acid sequence, 93 residues long: UPF0358 protein lmo1070 (93 aa).

It belongs to the UPF0358 family.

This Listeria monocytogenes serovar 1/2a (strain ATCC BAA-679 / EGD-e) protein is UPF0358 protein lmo1070.